The primary structure comprises 89 residues: Small ribosomal subunit protein bS20 (89 aa).

The span at 1 to 12 shows a compositional bias: basic residues; that stretch reads MANIKSAKKRVK. Residues 1–20 are disordered; that stretch reads MANIKSAKKRVKQTVVRNER.

It belongs to the bacterial ribosomal protein bS20 family.

Its function is as follows. Binds directly to 16S ribosomal RNA. In Xylella fastidiosa (strain 9a5c), this protein is Small ribosomal subunit protein bS20.